We begin with the raw amino-acid sequence, 356 residues long: Nicotinate-nucleotide--dimethylbenzimidazole phosphoribosyltransferase (356 aa).

The active-site Proton acceptor is glutamate 317.

This sequence belongs to the CobT family. Homodimer.

It carries out the reaction 5,6-dimethylbenzimidazole + nicotinate beta-D-ribonucleotide = alpha-ribazole 5'-phosphate + nicotinate + H(+). It participates in nucleoside biosynthesis; alpha-ribazole biosynthesis; alpha-ribazole from 5,6-dimethylbenzimidazole: step 1/2. In terms of biological role, catalyzes the synthesis of alpha-ribazole-5'-phosphate from nicotinate mononucleotide (NAMN) and 5,6-dimethylbenzimidazole (DMB). The polypeptide is Nicotinate-nucleotide--dimethylbenzimidazole phosphoribosyltransferase (Salmonella typhi).